The following is a 290-amino-acid chain: 2-dehydro-3-deoxy-phosphogluconate/2-dehydro-3-deoxy-6-phosphogalactonate aldolase (290 aa).

Substrate contacts are provided by residues 42-43, 129-131, and 155-157; these read TT, YNY, and KDT. Lys-155 functions as the Schiff-base intermediate with substrate in the catalytic mechanism.

This sequence belongs to the DapA family. KDPG aldolase subfamily. In terms of assembly, homotetramer; dimer of dimers.

The enzyme catalyses 2-dehydro-3-deoxy-6-phospho-D-gluconate = D-glyceraldehyde 3-phosphate + pyruvate. The catalysed reaction is 2-dehydro-3-deoxy-6-phospho-D-galactonate = D-glyceraldehyde 3-phosphate + pyruvate. It participates in carbohydrate acid metabolism; 2-dehydro-3-deoxy-D-gluconate degradation; D-glyceraldehyde 3-phosphate and pyruvate from 2-dehydro-3-deoxy-D-gluconate: step 2/2. In terms of biological role, involved in the degradation of glucose and galactose via the Entner-Doudoroff pathway. Catalyzes the reversible cleavage of 2-keto-3-deoxy-6-phosphogluconate (KDPG) and 2-keto-3-deoxygluconate (KDG) forming pyruvate and glyceraldehyde 3-phosphate or glyceraldehyde, respectively. It is also able to catalyze the reversible cleavage of 2-keto-3-deoxy-6-phosphogalactonate (KDPGal) and 2-keto-3-deoxygalactonate (KDGal). The chain is 2-dehydro-3-deoxy-phosphogluconate/2-dehydro-3-deoxy-6-phosphogalactonate aldolase (kdgA) from Sulfurisphaera tokodaii (strain DSM 16993 / JCM 10545 / NBRC 100140 / 7) (Sulfolobus tokodaii).